Consider the following 217-residue polypeptide: Adenylate kinase (217 aa).

10–15 serves as a coordination point for ATP; sequence GAGKGT. The NMP stretch occupies residues 30–59; the sequence is STGDIFRAAMKNETPMGIEAKKYIDKGELV. Residues Thr-31, Arg-36, 57–59, 85–88, and Gln-92 each bind AMP; these read ELV and GFPR. The LID stretch occupies residues 126–164; the sequence is GRFICRNCGATYHKLYNAPKVEGTCDVCGHHEFYQRDDD. Arg-127 is an ATP binding site. Zn(2+) is bound by residues Cys-130 and Cys-133. ATP is bound at residue 136 to 137; sequence TY. Zn(2+) is bound by residues Cys-150 and Cys-153. Arg-161 and Arg-172 together coordinate AMP. An ATP-binding site is contributed by Gln-200.

The protein belongs to the adenylate kinase family. As to quaternary structure, monomer.

The protein localises to the cytoplasm. The catalysed reaction is AMP + ATP = 2 ADP. It functions in the pathway purine metabolism; AMP biosynthesis via salvage pathway; AMP from ADP: step 1/1. Catalyzes the reversible transfer of the terminal phosphate group between ATP and AMP. Plays an important role in cellular energy homeostasis and in adenine nucleotide metabolism. The protein is Adenylate kinase of Limosilactobacillus reuteri subsp. reuteri (strain JCM 1112) (Lactobacillus reuteri).